The following is a 346-amino-acid chain: N-acetyl-gamma-glutamyl-phosphate reductase (346 aa).

The active site involves Cys151.

The protein belongs to the NAGSA dehydrogenase family. Type 1 subfamily.

It is found in the cytoplasm. The enzyme catalyses N-acetyl-L-glutamate 5-semialdehyde + phosphate + NADP(+) = N-acetyl-L-glutamyl 5-phosphate + NADPH + H(+). Its pathway is amino-acid biosynthesis; L-arginine biosynthesis; N(2)-acetyl-L-ornithine from L-glutamate: step 3/4. Catalyzes the NADPH-dependent reduction of N-acetyl-5-glutamyl phosphate to yield N-acetyl-L-glutamate 5-semialdehyde. In Ehrlichia canis (strain Jake), this protein is N-acetyl-gamma-glutamyl-phosphate reductase.